We begin with the raw amino-acid sequence, 1000 residues long: MTINIKYSSKFSSSKTSSSEELKPKTYIPAYYQPPVSMPKYYVNWLRIKLSLNKLKNIRAIYLFDQCQNFNQYQESSRKFSAGQVSSLTPWYSNFSNYSTVILRMKDTSLPPLENPSNGGTYLFNLITVFPSIALSFNYSWRGDTGPSISIFSFSLSVLFFSLFPQHKNICARAWCRPFRRSLSFSLRFIMSSEPASSSTEKVPEEPHPHSIKHKFQGPQFVIPRALSDYVLNVNNQTPESYEKALNAKYGRDDYITLCLHVTSLCTEYGPLDDGPEYVLLCDSRARVDKLIEDLVKLLEIDTDYVQLELHGGKRLHLQKPDAVLRDIAYKQSNEGSDKFFLEMKLVPSESMKAKIMKQEEEEEKARKHGQYQQYQEYHQQHQAMNDGQSSSSVPSTSSPSCSSEANRKEMETVREPAGPSELMRAINAPVAPAPVVIKIETPVALPEEDETLMDDDEMPSLTVEAPSEEASFEAEQPSPQVPQASIEGPSQQQQIPGTSQQKRQVARGSRTNMISYHDLPPGTGNAPPMACPQVTLKLEKNVPFEAKIRAVAGYTRKPISEVQKMRPSDLESIFHSICIASVQRIKRRNELVQQLQEINAQSCKSPTMTMNKKFTLAKAYQRVQNEIEKIDREQILPQQYMNMPPMPPQGQQRLPPPAYPPGILPPQQNRQQGVPPQFQRSPQFMIGPDGQRYAHPYMQLPNSNQRARILNTSSVQPSEEVRNRLVKIEAMAMNMAQLNPPRPPPPQPPHRALQGELQFLRPGAPDPCNFRPDSKQTYNNTYVTVASPATLTNSIIPWHFPPYEKSGRLNVSNTIKAINEYRLLCNSRQADPASFLEFYFLGDPMPHFNKILSIADYNMYLSRRRCDEADVKIHRMSHSDQLQLYLLELQSDESNVEKWKTFYRIMQWDLPLNNEFPRILLPSSLDIGRPVVDRKKKSIDQVMNHIHRMHSQRPPSMGNSSTSSEASSTSPTNAATATSSPASNRPTTSTAQPPTLNPT.

3 disordered regions span residues 355 to 374, 379 to 422, and 466 to 509; these read KIMK…QYQQ, HQQH…GPSE, and APSE…VARG. Residues 390–404 show a composition bias toward low complexity; the sequence is SSSSVPSTSSPSCSS. Basic and acidic residues predominate over residues 406-415; it reads ANRKEMETVR. The span at 489–502 shows a compositional bias: low complexity; it reads GPSQQQQIPGTSQQ. The segment at 633-720 is RNA-binding; sequence REQILPQQYM…LNTSSVQPSE (88 aa). The interval 948–1000 is disordered; sequence HRMHSQRPPSMGNSSTSSEASSTSPTNAATATSSPASNRPTTSTAQPPTLNPT. Residues 960–992 are compositionally biased toward low complexity; sequence NSSTSSEASSTSPTNAATATSSPASNRPTTSTA.

As to quaternary structure, binds through its N-terminal region to the N-terminal region of sop-2.

The protein localises to the nucleus. Functionally, acts synergistically with sop-2 to maintain the transcriptionally repressive state of homeotic genes throughout development. Not required to initiate repression, but to maintain it during later stages of development. Also required to repress expression of other genes. Binds RNA in a sequence-independent manner. In Caenorhabditis elegans, this protein is Sop-2-related protein 1 (sor-1).